The following is a 399-amino-acid chain: MSDILSINDLELNGAKVFIRCDFNVPMDEFLNITDDRRIRSAIPTIRYCLDNGCSVVLASHLGRPKNGYEEKFSLQGVAKRLSRLLDREVIFAEDVIGNDAKTKAEALKAGEILMIENLRFEKGETKNDEALAKELSEFGEFYINDAFGVCHRAHSSVEAITKFYDEKHKAAGFLLQKEINFAQNLIKHPSRPFVAVVGGSKVSGKLQALHNLLPRVDKLIIGGGMAFTFLKSLGENIGNSLLEEELIEDARQILQKGKELGVKIYLPVDVVAAQTFSAESAVKYVPAQEIPNGWMGLDIGPASIRLFKEVIADAQTIWWNGPMGVFEMDKFSKGSIKMSHAIIDTHATTVVGGGDTADVVERAGDADEMTFISTGGGASLELIEGKELPGIKPLRKEE.

Residues 22 to 24, arginine 38, 61 to 64, arginine 120, and arginine 153 contribute to the substrate site; these read DFN and HLGR. Residues lysine 206, glycine 297, glutamate 328, and 354–357 contribute to the ATP site; that span reads GGDT.

It belongs to the phosphoglycerate kinase family. As to quaternary structure, monomer.

The protein resides in the cytoplasm. It catalyses the reaction (2R)-3-phosphoglycerate + ATP = (2R)-3-phospho-glyceroyl phosphate + ADP. It functions in the pathway carbohydrate degradation; glycolysis; pyruvate from D-glyceraldehyde 3-phosphate: step 2/5. The polypeptide is Phosphoglycerate kinase (Campylobacter concisus (strain 13826)).